We begin with the raw amino-acid sequence, 421 residues long: MAATLILEPAGRCCWDEPVRIAVRGLAPEQPVTLRASLRDEKGALFQAHARYRADTLGELDLERAPALGGSFAGLEPMGLLWALEPEKPLVRLVKRDVRTPLAVELEVLDGHDPDPGRLLCRVRHERYFLPPGVRREPVRAGRVRGTLFLPPEPGPFPGIVDMFGTGGGLLEYRASLLAGKGFAVMALAYYNYEDLPKTMETLHLEYFEEAVNYLLSHPEVKGPGVGLLGISKGGELCLSMASFLKGITAAVVINGSVANVGGTLRYKGETLPPVGVNRNRIKVTKDGYADIVDVLNSPLEGPDQKSFIPVERAESTFLFLVGQDDHNWKSEFYANEACKRLQAHGRRKPQIICYPETGHYIEPPYFPLCRASLHALVGSPIIWGGEPRAHAMAQVDAWKQLQTFFHKHLGGHEGTIPSKV.

Catalysis depends on charge relay system residues Ser-232, Asp-326, and His-360.

Belongs to the C/M/P thioester hydrolase family. In terms of assembly, monomer.

The protein resides in the cytoplasm. The protein localises to the cytosol. It catalyses the reaction hexadecanoyl-CoA + H2O = hexadecanoate + CoA + H(+). The catalysed reaction is decanoyl-CoA + H2O = decanoate + CoA + H(+). It carries out the reaction dodecanoyl-CoA + H2O = dodecanoate + CoA + H(+). The enzyme catalyses tetradecanoyl-CoA + H2O = tetradecanoate + CoA + H(+). It catalyses the reaction octadecanoyl-CoA + H2O = octadecanoate + CoA + H(+). The catalysed reaction is eicosanoyl-CoA + H2O = eicosanoate + CoA + H(+). It carries out the reaction (9Z)-octadecenoyl-CoA + H2O = (9Z)-octadecenoate + CoA + H(+). The enzyme catalyses (9Z)-hexadecenoyl-CoA + H2O = (9Z)-hexadecenoate + CoA + H(+). It catalyses the reaction (9E)-octadecenoyl-CoA + H2O = (9E)-octadecenoate + CoA + H(+). The protein operates within lipid metabolism; fatty acid metabolism. Functionally, catalyzes the hydrolysis of acyl-CoAs into free fatty acids and coenzyme A (CoASH), regulating their respective intracellular levels. More active towards saturated and unsaturated long chain fatty acyl-CoAs (C12-C20). This chain is Acyl-coenzyme A thioesterase 1 (ACOT1), found in Homo sapiens (Human).